The chain runs to 421 residues: Outer capsid protein P8 (421 aa).

It belongs to the phytoreovirus outer capsid protein P8 family. Homotrimer. Homomultimer. Interacts with host peroxisomal glycolate oxidase (GOX). This interaction mediates its relocation to virus factories peripheral to host peroxisomes.

The protein resides in the virion. It localises to the host cytoplasm. In terms of biological role, capsid protein which self-assembles to form the outer icosahedral capsid with a T=13 symmetry, about 70 nm in diameter and consisting of 780 molecules capsid proteins. This Rice dwarf virus (isolate S) (RDV) protein is Outer capsid protein P8 (S8).